A 152-amino-acid chain; its full sequence is UPF0266 membrane protein YobD (152 aa).

3 helical membrane-spanning segments follow: residues 6-26 (LVLI…QFIM), 45-65 (IDSV…VTNH), and 67-87 (AQIT…IFWI).

It belongs to the UPF0266 family.

It is found in the cell inner membrane. The polypeptide is UPF0266 membrane protein YobD (Escherichia fergusonii (strain ATCC 35469 / DSM 13698 / CCUG 18766 / IAM 14443 / JCM 21226 / LMG 7866 / NBRC 102419 / NCTC 12128 / CDC 0568-73)).